Here is a 716-residue protein sequence, read N- to C-terminus: FLYWCH-type zinc finger-containing protein 1 (716 aa).

Residues 1-35 (MPLPEPSEQEGESVKAGQEPSPKPGTDVIPAAPRK) form a disordered region. S21 bears the Phosphoserine mark. Residues 116–174 (FLRTPFGGRLLVLESFLYKQEKAVGDKVYWKCRQHAELGCRGRAITRGLRATVMRGHCH) form an FLYWCH-type 1 zinc finger. A Glycyl lysine isopeptide (Lys-Gly) (interchain with G-Cter in SUMO2) cross-link involves residue K134. The interval 191 to 231 (PSLALPEGLGEPQGPEGPGGRVEEPLEGVGPWQCPEEPEPT) is disordered. The span at 195–204 (LPEGLGEPQG) shows a compositional bias: low complexity. S261 is subject to Phosphoserine. An FLYWCH-type 2 zinc finger spans residues 273–331 (FLRTCYGGSFLVHESFLYKREKAVGDKVYWTCRDHALHGCRSRAITQGQRVTVMRGHCH). S371 carries the post-translational modification Phosphoserine. The tract at residues 377–421 (GPGPLTLTRPRPRKRAKVEDQELPTQPEAPDEHQDMDADPGGPEF) is disordered. K393 is covalently cross-linked (Glycyl lysine isopeptide (Lys-Gly) (interchain with G-Cter in SUMO2)). Residues 421–479 (FLKTPLGGSFLVYESFLYRREKAAGEKVYWTCRDQARMGCRSRAITQGRRVTVMRGHCH) form an FLYWCH-type 3 zinc finger. S503 bears the Phosphoserine mark. The FLYWCH-type 4 zinc-finger motif lies at 509-567 (FLKTPLGGSFLVYESFLYRREKAAGEKVYWTCRDQARMGCRSRAITQGRRVMVMRRHCH). At S591 the chain carries Phosphoserine. The FLYWCH-type 5 zinc finger occupies 600 to 658 (FLRTSLGGRFLVHESFLYRKEKAAGEKVYWMCRDQARLGCRSRAITQGHRIMVMRSHCH). Residue K685 forms a Glycyl lysine isopeptide (Lys-Gly) (interchain with G-Cter in SUMO2) linkage. S696 carries the phosphoserine modification.

Interacts with CTNNB1 (when unphosphorylated), perhaps preventing interaction of CTNNB1 with TCF4, and thereby regulating transcription activation; phosphorylation of CTNNB1 may inhibit the interaction.

Its subcellular location is the nucleus. The protein resides in the chromosome. The protein localises to the centromere. Functionally, transcription cofactor. Negatively regulates transcription activation by catenin beta-1 CTNNB1, perhaps acting by competing with TCF4 for CTNNB1 binding. May play a role in DNA-damage response signaling. Binds specifically to DNA sequences at peri-centromeric chromatin loci. The chain is FLYWCH-type zinc finger-containing protein 1 (FLYWCH1) from Homo sapiens (Human).